A 197-amino-acid polypeptide reads, in one-letter code: MRIGLTGGIASGKSLVATYLEKQGIPVVDADKLARQVVEPGEPALAQIVATFGEHVLQDDGTLDRKQLGAIIFGDEQKRKQLNEIVHPAVRQSMKKQADLYEQRGYTRVVLDIPLLYESNLFHMVNQVWLVYVDEATQLRRLIERDGLTETEAKQRIAAQMPLTAKKAQADVLIDNNGTKENTYRQVYDALAKTAHE.

Positions 2 to 197 constitute a DPCK domain; the sequence is RIGLTGGIAS…YDALAKTAHE (196 aa). 10 to 15 lines the ATP pocket; the sequence is ASGKSL.

The protein belongs to the CoaE family.

The protein resides in the cytoplasm. It catalyses the reaction 3'-dephospho-CoA + ATP = ADP + CoA + H(+). It functions in the pathway cofactor biosynthesis; coenzyme A biosynthesis; CoA from (R)-pantothenate: step 5/5. Functionally, catalyzes the phosphorylation of the 3'-hydroxyl group of dephosphocoenzyme A to form coenzyme A. The protein is Dephospho-CoA kinase of Shouchella clausii (strain KSM-K16) (Alkalihalobacillus clausii).